A 377-amino-acid chain; its full sequence is All-trans-retinol dehydrogenase [NAD(+)] ADH4 (377 aa).

Cys-47 lines the Zn(2+) pocket. Thr-49 is an NAD(+) binding site. 6 residues coordinate Zn(2+): His-68, Cys-98, Cys-101, Cys-104, Cys-112, and Cys-179. NAD(+) contacts are provided by residues 204-209 (GLGCVG), Asp-228, Lys-233, 297-299 (VGA), 320-322 (TFF), and Arg-372.

It belongs to the zinc-containing alcohol dehydrogenase family. Class-II subfamily. In terms of assembly, dimer. Requires Zn(2+) as cofactor. Liver specific.

It localises to the cytoplasm. It carries out the reaction all-trans-retinol + NAD(+) = all-trans-retinal + NADH + H(+). The catalysed reaction is 9-cis-retinol + NAD(+) = 9-cis-retinal + NADH + H(+). The enzyme catalyses 20-hydroxy-(5Z,8Z,11Z,14Z)-eicosatetraenoate + NAD(+) = 20-oxo-(5Z,8Z,11Z,14Z)-eicosatetraenoate + NADH + H(+). It catalyses the reaction 20-oxo-(5Z,8Z,11Z,14Z)-eicosatetraenoate + NAD(+) + H2O = (5Z,8Z,11Z,14Z)-eicosatetraenedioate + NADH + 2 H(+). It carries out the reaction 1,4-benzoquinone + NADH + H(+) = hydroquinone + NAD(+). Its activity is regulated as follows. Oxidation of 20-HETE is inhibited by low concentrations of N-heptylformamide. Oxidation of 20-HETE is a decreased by 55-65% by either all-trans-retinol or all-trans-retinoic acid. Strongly inhibited by omega-hydroxy fatty acids. Its function is as follows. Catalyzes the NAD-dependent oxidation of either all-trans-retinol or 9-cis-retinol. Also oxidizes long chain omega-hydroxy fatty acids, such as 20-HETE, producing both the intermediate aldehyde, 20-oxoarachidonate and the end product, a dicarboxylic acid, (5Z,8Z,11Z,14Z)-eicosatetraenedioate. Also catalyzes the reduction of benzoquinones. The sequence is that of All-trans-retinol dehydrogenase [NAD(+)] ADH4 from Mus musculus (Mouse).